We begin with the raw amino-acid sequence, 192 residues long: MEYRSLTLDDFLSRFQLLRPQINRETLNHRQAAVLIPIVRRPQPGLLLTQRSIHLRKHAGQVAFPGGAVDDTDTSVIAAALREAEEEVAIPPSAVEVIGVLPPVDSVTGYQVTPVVGIIPPDLPYRASEDEVSAVFEMPLAQALHLGRYHPLDIYRRGDSHRVWLSWYEQYFVWGMTAGIIRELALQIGVKP.

The region spanning 29 to 160 (HRQAAVLIPI…PLDIYRRGDS (132 aa)) is the Nudix hydrolase domain. The short motif at 67-89 (GAVDDTDTSVIAAALREAEEEVA) is the Nudix box element. Glu83 and Glu87 together coordinate Mg(2+).

This sequence belongs to the Nudix hydrolase family. PCD1 subfamily. Mn(2+) serves as cofactor. Requires Mg(2+) as cofactor.

In terms of biological role, probably mediates the hydrolysis of some nucleoside diphosphate derivatives. This is an uncharacterized protein from Escherichia coli O6:H1 (strain CFT073 / ATCC 700928 / UPEC).